Here is a 382-residue protein sequence, read N- to C-terminus: Ubiquitin-like protease 4 (382 aa).

Positions 46-106 are disordered; that stretch reads GTHLDGSIGE…DNDEWTNQKR (61 aa). Residues 84-100 are compositionally biased toward acidic residues; the sequence is DLVDEDEEEEDEEDNDE.

This sequence belongs to the peptidase C48 family. In terms of tissue distribution, expressed in hermaphrodite-specific neurons, head muscles, body wall muscles and pharyngeal cells.

The protein localises to the cytoplasm. It is found in the cytoskeleton. Its subcellular location is the microtubule organizing center. The protein resides in the centrosome. It localises to the nucleus. The protein localises to the mitochondrion matrix. Its pathway is protein modification; protein sumoylation. In terms of biological role, protease required for deconjugation of smo-1 conjugates from target proteins which is necessary for cell cycle progression. Required for respiration and the maintenance of normal mitochondrial homeostasis. In response to mitochondrial stress, required for the removal of smo-1 conjugates from the transcription factor dve-1, which promotes the translocation of dve-1 from the cytosol to the nucleus to initiate the mitochondrial unfolded protein response. Furthermore, removes the smo-1 conjugates from the transcription factor atfs-1 to promote its stability and activate the mitochondrial unfolded protein response. Also plays a role in promoting mitochondrial unfolded protein response-mediated innate immunity following infection with P.aeruginosa. This Caenorhabditis elegans protein is Ubiquitin-like protease 4.